Consider the following 212-residue polypeptide: Phosphatidylserine decarboxylase proenzyme (212 aa).

Ser182 acts as the Schiff-base intermediate with substrate; via pyruvic acid in catalysis. Position 182 is a pyruvic acid (Ser); by autocatalysis (Ser182).

Belongs to the phosphatidylserine decarboxylase family. PSD-A subfamily. Heterodimer of a large membrane-associated beta subunit and a small pyruvoyl-containing alpha subunit. It depends on pyruvate as a cofactor. In terms of processing, is synthesized initially as an inactive proenzyme. Formation of the active enzyme involves a self-maturation process in which the active site pyruvoyl group is generated from an internal serine residue via an autocatalytic post-translational modification. Two non-identical subunits are generated from the proenzyme in this reaction, and the pyruvate is formed at the N-terminus of the alpha chain, which is derived from the carboxyl end of the proenzyme. The post-translation cleavage follows an unusual pathway, termed non-hydrolytic serinolysis, in which the side chain hydroxyl group of the serine supplies its oxygen atom to form the C-terminus of the beta chain, while the remainder of the serine residue undergoes an oxidative deamination to produce ammonia and the pyruvoyl prosthetic group on the alpha chain.

Its subcellular location is the cell membrane. It catalyses the reaction a 1,2-diacyl-sn-glycero-3-phospho-L-serine + H(+) = a 1,2-diacyl-sn-glycero-3-phosphoethanolamine + CO2. Its pathway is phospholipid metabolism; phosphatidylethanolamine biosynthesis; phosphatidylethanolamine from CDP-diacylglycerol: step 2/2. Catalyzes the formation of phosphatidylethanolamine (PtdEtn) from phosphatidylserine (PtdSer). The chain is Phosphatidylserine decarboxylase proenzyme from Chlorobium phaeobacteroides (strain DSM 266 / SMG 266 / 2430).